A 268-amino-acid chain; its full sequence is Nickel import ATP-binding protein NikE (268 aa).

In terms of domain architecture, ABC transporter spans 4-252; the sequence is LNVSGLSHHY…SSDAGRVLQN (249 aa). 45–52 contributes to the ATP binding site; it reads GRSGCGKS.

It belongs to the ABC transporter superfamily. Nickel importer (TC 3.A.1.5.3) family. As to quaternary structure, the complex is composed of two ATP-binding proteins (NikD and NikE), two transmembrane proteins (NikB and NikC) and a solute-binding protein (NikA).

It localises to the cell inner membrane. The catalysed reaction is Ni(2+)(out) + ATP + H2O = Ni(2+)(in) + ADP + phosphate + H(+). Part of the ABC transporter complex NikABCDE involved in nickel import. Responsible for energy coupling to the transport system. The sequence is that of Nickel import ATP-binding protein NikE from Shigella sonnei (strain Ss046).